Reading from the N-terminus, the 1398-residue chain is Disease resistance protein RPV1 (1398 aa).

One can recognise a TIR domain in the interval 22–185 (TTYDVFLSFR…EITNSIFRQL (164 aa)). Residues 31–36 (RGEDTR) and Gly63 each bind NAD(+). The active site involves Glu97. Residues 201–440 (SHVKEMILRL…KRSYDGLDRI (240 aa)) form the NB-ARC domain. LRR repeat units follow at residues 203–225 (VKEM…IYGV), 423–447 (KADI…IFLD), 478–504 (LNDL…GWEI), 535–560 (IKSV…VFAK), 610–632 (SYEL…NFDG), 633–657 (GKLV…DLER), 678–702 (MPNL…VGNM), 703–726 (KKLT…IGDL), 728–750 (SLES…GGNM), 751–773 (KSLT…IGDL), 775–797 (SLES…GGNM), 798–820 (KSLT…IGDL), 822–844 (SLEI…GGNM), 845–867 (KSLK…IGDL), 869–891 (SLKY…GGNM), 892–914 (KRLL…IGDL), 916–938 (SLKY…GGNM), 939–961 (KSLT…IGDL), 963–985 (SLEI…GGNM), 986–1008 (KSLK…IGDL), 1010–1032 (SLKY…GGNM), 1033–1055 (KSLL…IGDL), 1079–1102 (MKSL…IGDL), and 1105–1128 (LEML…AIDA). A compositionally biased stretch (polar residues) spans 1315 to 1328 (QNSGDNGSALQDAN). Residues 1315–1336 (QNSGDNGSALQDANGNVHGANQ) are disordered. The LRR 25 repeat unit spans residues 1346 to 1369 (LDLLRNLSLGDNGSVVLEDTLGNR). The Nuclear localization signal signature appears at 1369–1373 (RKRRR).

The protein belongs to the disease resistance TIR-NB-LRR family. In terms of assembly, homodimer; homodimerization is required for NAD(+) hydrolase (NADase) activity.

It localises to the nucleus. The protein localises to the cytoplasm. The enzyme catalyses NAD(+) + H2O = ADP-D-ribose + nicotinamide + H(+). Its function is as follows. Disease resistance (R) protein that confers resistance to multiple powdery and downy mildew by promoting cell death. Acts as a NAD(+) hydrolase (NADase): in response to activation, catalyzes cleavage of NAD(+) into ADP-D-ribose (ADPR) and nicotinamide; NAD(+) cleavage triggering a defense system that promotes cell death. This Vitis rotundifolia (Muscadine grape) protein is Disease resistance protein RPV1.